The primary structure comprises 189 residues: Haloacid dehalogenase-like hydrolase domain-containing protein 3 (189 aa).

This sequence belongs to the HAD-like hydrolase superfamily.

The polypeptide is Haloacid dehalogenase-like hydrolase domain-containing protein 3 (hdhd3) (Xenopus tropicalis (Western clawed frog)).